We begin with the raw amino-acid sequence, 147 residues long: Ribonuclease H (147 aa).

Residues 5-141 (ARKQITLYSD…CDELARNEAE (137 aa)) form the RNase H type-1 domain. Mg(2+)-binding residues include Asp14, Glu52, Asp74, and Asp133.

It belongs to the RNase H family. As to quaternary structure, monomer. It depends on Mg(2+) as a cofactor.

The protein localises to the cytoplasm. The catalysed reaction is Endonucleolytic cleavage to 5'-phosphomonoester.. Functionally, endonuclease that specifically degrades the RNA of RNA-DNA hybrids. This chain is Ribonuclease H, found in Sulfurovum sp. (strain NBC37-1).